Consider the following 305-residue polypeptide: Methionyl-tRNA formyltransferase (305 aa).

111–114 is a (6S)-5,6,7,8-tetrahydrofolate binding site; the sequence is SILP.

The protein belongs to the Fmt family.

It catalyses the reaction L-methionyl-tRNA(fMet) + (6R)-10-formyltetrahydrofolate = N-formyl-L-methionyl-tRNA(fMet) + (6S)-5,6,7,8-tetrahydrofolate + H(+). Functionally, attaches a formyl group to the free amino group of methionyl-tRNA(fMet). The formyl group appears to play a dual role in the initiator identity of N-formylmethionyl-tRNA by promoting its recognition by IF2 and preventing the misappropriation of this tRNA by the elongation apparatus. The chain is Methionyl-tRNA formyltransferase from Wolinella succinogenes (strain ATCC 29543 / DSM 1740 / CCUG 13145 / JCM 31913 / LMG 7466 / NCTC 11488 / FDC 602W) (Vibrio succinogenes).